The primary structure comprises 507 residues: Histidine ammonia-lyase (507 aa).

Positions 141–143 form a cross-link, 5-imidazolinone (Ala-Gly); that stretch reads ASG. Ser142 is modified (2,3-didehydroalanine (Ser)).

Belongs to the PAL/histidase family. Contains an active site 4-methylidene-imidazol-5-one (MIO), which is formed autocatalytically by cyclization and dehydration of residues Ala-Ser-Gly.

The protein localises to the cytoplasm. It catalyses the reaction L-histidine = trans-urocanate + NH4(+). It functions in the pathway amino-acid degradation; L-histidine degradation into L-glutamate; N-formimidoyl-L-glutamate from L-histidine: step 1/3. The sequence is that of Histidine ammonia-lyase from Paraburkholderia phytofirmans (strain DSM 17436 / LMG 22146 / PsJN) (Burkholderia phytofirmans).